The chain runs to 251 residues: Small ribosomal subunit protein uS2 (251 aa).

The protein belongs to the universal ribosomal protein uS2 family.

This Deinococcus deserti (strain DSM 17065 / CIP 109153 / LMG 22923 / VCD115) protein is Small ribosomal subunit protein uS2.